The sequence spans 393 residues: NAD(P)H-quinone oxidoreductase subunit H, chloroplastic (393 aa).

This sequence belongs to the complex I 49 kDa subunit family. In terms of assembly, NDH is composed of at least 16 different subunits, 5 of which are encoded in the nucleus.

The protein resides in the plastid. It localises to the chloroplast thylakoid membrane. The catalysed reaction is a plastoquinone + NADH + (n+1) H(+)(in) = a plastoquinol + NAD(+) + n H(+)(out). It carries out the reaction a plastoquinone + NADPH + (n+1) H(+)(in) = a plastoquinol + NADP(+) + n H(+)(out). NDH shuttles electrons from NAD(P)H:plastoquinone, via FMN and iron-sulfur (Fe-S) centers, to quinones in the photosynthetic chain and possibly in a chloroplast respiratory chain. The immediate electron acceptor for the enzyme in this species is believed to be plastoquinone. Couples the redox reaction to proton translocation, and thus conserves the redox energy in a proton gradient. The chain is NAD(P)H-quinone oxidoreductase subunit H, chloroplastic from Vitis vinifera (Grape).